We begin with the raw amino-acid sequence, 258 residues long: Indole-3-glycerol phosphate synthase (258 aa).

Belongs to the TrpC family.

It catalyses the reaction 1-(2-carboxyphenylamino)-1-deoxy-D-ribulose 5-phosphate + H(+) = (1S,2R)-1-C-(indol-3-yl)glycerol 3-phosphate + CO2 + H2O. The protein operates within amino-acid biosynthesis; L-tryptophan biosynthesis; L-tryptophan from chorismate: step 4/5. This is Indole-3-glycerol phosphate synthase from Nautilia profundicola (strain ATCC BAA-1463 / DSM 18972 / AmH).